Reading from the N-terminus, the 759-residue chain is GTPase-activating protein rrc-1 (759 aa).

One can recognise an SH3 domain in the interval 164–243 (PAIAAAVVTK…PRDCVMLIDD (80 aa)). In terms of domain architecture, Rho-GAP spans 280-473 (LELTDLYMRT…FFIENSESLF (194 aa)). Residues 591 to 624 (ARSMRPTSRPPPSPRTRRARFSNGSSNNVQKLNE) are disordered. Polar residues predominate over residues 612–622 (SNGSSNNVQKL).

Expressed in coelomocytes, excretory cells, uterine-seam cells and GLR cells.

Its function is as follows. Functions as a GTPase-activating protein (GAP) for ced-10/rac-1 and CDC42. This chain is GTPase-activating protein rrc-1 (rrc-1), found in Caenorhabditis elegans.